Here is a 528-residue protein sequence, read N- to C-terminus: Ribonuclease Y (528 aa).

The chain crosses the membrane as a helical span at residues Ser-15 to Phe-35. Residues Asn-217 to Leu-277 form the KH domain. The 94-residue stretch at Val-343–Ala-436 folds into the HD domain.

Belongs to the RNase Y family.

It localises to the cell membrane. Its function is as follows. Endoribonuclease that initiates mRNA decay. This chain is Ribonuclease Y, found in Onion yellows phytoplasma (strain OY-M).